A 204-amino-acid chain; its full sequence is 8-oxoguanine DNA glycosylase/AP lyase (204 aa).

Residues Lys129 and Asp147 contribute to the active site.

Belongs to the type-2 OGG1 family.

The catalysed reaction is 2'-deoxyribonucleotide-(2'-deoxyribose 5'-phosphate)-2'-deoxyribonucleotide-DNA = a 3'-end 2'-deoxyribonucleotide-(2,3-dehydro-2,3-deoxyribose 5'-phosphate)-DNA + a 5'-end 5'-phospho-2'-deoxyribonucleoside-DNA + H(+). Its function is as follows. Catalyzes the excision of an oxidatively damaged form of guanine (7,8-dihydro-8-oxoguanine = 8-oxoG) from DNA. Also cleaves the DNA backbone at apurinic/apyrimidinic sites (AP sites). Prefers oligomers containing 8-oxoG:C, 8-oxoG:T and 8-oxoG:G base pairs, and is less effective on oligomers containing 8-oxoG:A mispairs. The polypeptide is 8-oxoguanine DNA glycosylase/AP lyase (Thermoplasma volcanium (strain ATCC 51530 / DSM 4299 / JCM 9571 / NBRC 15438 / GSS1)).